Reading from the N-terminus, the 220-residue chain is Thiopurine S-methyltransferase (220 aa).

S-adenosyl-L-methionine contacts are provided by tryptophan 10, leucine 45, glutamate 66, and arginine 123.

This sequence belongs to the class I-like SAM-binding methyltransferase superfamily. TPMT family.

It is found in the cytoplasm. The enzyme catalyses S-adenosyl-L-methionine + a thiopurine = S-adenosyl-L-homocysteine + a thiopurine S-methylether.. The polypeptide is Thiopurine S-methyltransferase (Nitrosomonas eutropha (strain DSM 101675 / C91 / Nm57)).